Here is a 447-residue protein sequence, read N- to C-terminus: Beclin-2 (447 aa).

Residues 169–228 adopt a coiled-coil conformation; the sequence is EALHAELCAELSSLEQEEARLTQELEDLDGHHARVAAELRAAQAESKELYKQHEQHRVEY. Positions 186–256 are required for homodimer formation; it reads EARLTQELED…NQLTYALSQQ (71 aa).

The protein belongs to the beclin family. As to quaternary structure, homodimer (via coiled-coil domain). Interacts (via coiled-coil domain) with ATG14 (via coiled-coil domain); this interaction is tighter than BECN2 self-association. Interacts with AMBRA1, UVRAG and PIK3C3/VPS34; these interactions are not disrupted by starvation. Does not interact with RUBCN. Interacts (via N-terminus) with GPRASP1/GASP1; the interaction is direct. Expressed in brain, skeletal muscle, placenta, thymus and uterus. Expressed at a lower level in liver, testis, stomach, and 17-day-old embryos.

The protein localises to the cytoplasm. Its function is as follows. Involved in 2 distinct lysosomal degradation pathways: acts as a regulator of autophagy and as a regulator of G-protein coupled receptors turnover. Regulates degradation in lysosomes of a variety of G-protein coupled receptors via its interaction with GPRASP1/GASP1. This is Beclin-2 from Mus musculus (Mouse).